A 437-amino-acid chain; its full sequence is Protein translocase subunit SecY (437 aa).

10 helical membrane passes run 19 to 39 (LFTL…IPGV), 69 to 89 (LLQI…SIIL), 122 to 142 (VALA…APLF), 157 to 177 (IFTT…VMWL), 189 to 209 (GMSI…LWAI), 219 to 239 (WIEF…VVFV), 276 to 296 (VIPV…AQFA), 316 to 336 (PIYI…YVAI), 378 to 398 (GSLY…GFGA), and 400 to 420 (QNFP…LETV).

The protein belongs to the SecY/SEC61-alpha family. Component of the Sec protein translocase complex. Heterotrimer consisting of SecY, SecE and SecG subunits. The heterotrimers can form oligomers, although 1 heterotrimer is thought to be able to translocate proteins. Interacts with the ribosome. Interacts with SecDF, and other proteins may be involved. Interacts with SecA.

It localises to the cell membrane. Its function is as follows. The central subunit of the protein translocation channel SecYEG. Consists of two halves formed by TMs 1-5 and 6-10. These two domains form a lateral gate at the front which open onto the bilayer between TMs 2 and 7, and are clamped together by SecE at the back. The channel is closed by both a pore ring composed of hydrophobic SecY resides and a short helix (helix 2A) on the extracellular side of the membrane which forms a plug. The plug probably moves laterally to allow the channel to open. The ring and the pore may move independently. The protein is Protein translocase subunit SecY of Streptomyces galbus.